The primary structure comprises 380 residues: MKVDYYEILGVTRECDDKKLKSAFRKLAMQYHPDRNAGDKEAERRFKEIGEAYEVLKDPQKRAAYDRFGHAAFENNNQGGGNPFGGFAAGGFSDIFEDFFGEIMGGGHRKRSDGRERGADLSYNMEVTLEEAFSGKTAQINIPSSIVCDSCEGSGAKKGSKPQICGTCHGAGRVRAAQGFFSIERTCHACNGRGEVITDPCPKCQGTRRVEKNRSLSVNIPAGIEDGTRIRLSGEGDAGIRGGPNGDLYIFLSVKPHEFFQREGADLHCRIPLSMVTAALGGEFEVSDLDGIKARVKIPEGTQNGRQFRLKGKGMPMLRRQQVRGDLYIHITIETPQKLTQEQRELLQKFEKLSNHENSPQSHGFFSRMKEFFENISGQN.

The region spanning 4-69 (DYYEILGVTR…QKRAAYDRFG (66 aa)) is the J domain. A CR-type zinc finger spans residues 135 to 213 (GKTAQINIPS…CQGTRRVEKN (79 aa)). Zn(2+) is bound by residues Cys-148, Cys-151, Cys-165, Cys-168, Cys-187, Cys-190, Cys-201, and Cys-204. CXXCXGXG motif repeat units lie at residues 148–155 (CDSCEGSG), 165–172 (CGTCHGAG), 187–194 (CHACNGRG), and 201–208 (CPKCQGTR).

Belongs to the DnaJ family. Homodimer. Zn(2+) is required as a cofactor.

Its subcellular location is the cytoplasm. Its function is as follows. Participates actively in the response to hyperosmotic and heat shock by preventing the aggregation of stress-denatured proteins and by disaggregating proteins, also in an autonomous, DnaK-independent fashion. Unfolded proteins bind initially to DnaJ; upon interaction with the DnaJ-bound protein, DnaK hydrolyzes its bound ATP, resulting in the formation of a stable complex. GrpE releases ADP from DnaK; ATP binding to DnaK triggers the release of the substrate protein, thus completing the reaction cycle. Several rounds of ATP-dependent interactions between DnaJ, DnaK and GrpE are required for fully efficient folding. Also involved, together with DnaK and GrpE, in the DNA replication of plasmids through activation of initiation proteins. The polypeptide is Chaperone protein DnaJ (Bartonella quintana (strain Toulouse) (Rochalimaea quintana)).